The sequence spans 78 residues: MSRVCQVTGKRPITGNNVSHSKRRTKRRFLPNLHWHRFWVEGENRYIRLRVSSKGMRIIDKKGIESVLAEIRANGEKV.

Residues 1 to 23 (MSRVCQVTGKRPITGNNVSHSKR) form a disordered region.

This sequence belongs to the bacterial ribosomal protein bL28 family.

The polypeptide is Large ribosomal subunit protein bL28 (Marinomonas sp. (strain MWYL1)).